Here is a 457-residue protein sequence, read N- to C-terminus: tRNA modification GTPase MnmE (457 aa).

3 residues coordinate (6S)-5-formyl-5,6,7,8-tetrahydrofolate: Arg22, Glu86, and Arg125. The TrmE-type G domain occupies 221-381 (GLRAVLAGRP…LEAEVARVAG (161 aa)). Asn231 is a binding site for K(+). Residues 231–236 (NVGKSS), 250–256 (TPIPGTT), and 275–278 (DTAG) each bind GTP. Ser235 lines the Mg(2+) pocket. The K(+) site is built by Thr250, Ile252, and Thr255. Position 256 (Thr256) interacts with Mg(2+). Lys457 is a (6S)-5-formyl-5,6,7,8-tetrahydrofolate binding site.

This sequence belongs to the TRAFAC class TrmE-Era-EngA-EngB-Septin-like GTPase superfamily. TrmE GTPase family. Homodimer. Heterotetramer of two MnmE and two MnmG subunits. Requires K(+) as cofactor.

Its subcellular location is the cytoplasm. Its function is as follows. Exhibits a very high intrinsic GTPase hydrolysis rate. Involved in the addition of a carboxymethylaminomethyl (cmnm) group at the wobble position (U34) of certain tRNAs, forming tRNA-cmnm(5)s(2)U34. The protein is tRNA modification GTPase MnmE of Symbiobacterium thermophilum (strain DSM 24528 / JCM 14929 / IAM 14863 / T).